A 71-amino-acid polypeptide reads, in one-letter code: Large ribosomal subunit protein uL29 (71 aa).

It belongs to the universal ribosomal protein uL29 family.

This Rickettsia massiliae (strain Mtu5) protein is Large ribosomal subunit protein uL29.